Reading from the N-terminus, the 538-residue chain is Putative cysteine ligase BshC (538 aa).

A coiled-coil region spans residues 248–268; the sequence is ISKYKEVQEGLRNQQEVIKEL.

It belongs to the BshC family.

Involved in bacillithiol (BSH) biosynthesis. May catalyze the last step of the pathway, the addition of cysteine to glucosamine malate (GlcN-Mal) to generate BSH. The protein is Putative cysteine ligase BshC of Bacillus cereus (strain ATCC 14579 / DSM 31 / CCUG 7414 / JCM 2152 / NBRC 15305 / NCIMB 9373 / NCTC 2599 / NRRL B-3711).